Consider the following 381-residue polypeptide: Alkanesulfonate monooxygenase (381 aa).

This sequence belongs to the SsuD family. In terms of assembly, homotetramer.

The enzyme catalyses an alkanesulfonate + FMNH2 + O2 = an aldehyde + FMN + sulfite + H2O + 2 H(+). In terms of biological role, catalyzes the desulfonation of aliphatic sulfonates. The polypeptide is Alkanesulfonate monooxygenase (Citrobacter koseri (strain ATCC BAA-895 / CDC 4225-83 / SGSC4696)).